Reading from the N-terminus, the 103-residue chain is Large ribosomal subunit protein bL21 (103 aa).

Belongs to the bacterial ribosomal protein bL21 family. Part of the 50S ribosomal subunit. Contacts protein L20.

Functionally, this protein binds to 23S rRNA in the presence of protein L20. The polypeptide is Large ribosomal subunit protein bL21 (Ruminiclostridium cellulolyticum (strain ATCC 35319 / DSM 5812 / JCM 6584 / H10) (Clostridium cellulolyticum)).